A 234-amino-acid polypeptide reads, in one-letter code: Uridylate kinase (234 aa).

Position 9–12 (9–12 (KLSG)) interacts with ATP. Gly51 provides a ligand contact to UMP. ATP is bound by residues Gly52 and Arg56. UMP is bound by residues Asp71 and 132-139 (CGNPFFTT). Thr159, Tyr165, and Asp168 together coordinate ATP.

It belongs to the UMP kinase family. In terms of assembly, homohexamer.

It is found in the cytoplasm. It carries out the reaction UMP + ATP = UDP + ADP. It participates in pyrimidine metabolism; CTP biosynthesis via de novo pathway; UDP from UMP (UMPK route): step 1/1. Its activity is regulated as follows. Inhibited by UTP. In terms of biological role, catalyzes the reversible phosphorylation of UMP to UDP. This Prochlorococcus marinus (strain MIT 9312) protein is Uridylate kinase.